The primary structure comprises 349 residues: Hyaluronidase Tab y 2.0101 (349 aa).

An N-terminal signal peptide occupies residues 1-25; the sequence is MKLHQGLVCLSVLILLPTCILGDRK. 2 disulfides stabilise this stretch: cysteine 37–cysteine 328 and cysteine 205–cysteine 216. Asparagine 41, asparagine 81, asparagine 99, and asparagine 119 each carry an N-linked (GlcNAc...) asparagine glycan. Glutamate 129 acts as the Proton donor in catalysis. N-linked (GlcNAc...) asparagine glycosylation occurs at asparagine 147. N-linked (GlcNAc...) asparagine glycans are attached at residues asparagine 251 and asparagine 297.

It belongs to the glycosyl hydrolase 56 family. As to expression, expressed in salivary glands.

The protein localises to the secreted. The catalysed reaction is Random hydrolysis of (1-&gt;4)-linkages between N-acetyl-beta-D-glucosamine and D-glucuronate residues in hyaluronate.. Its function is as follows. Hydrolyzes high molecular weight hyaluronic acid to produce small oligosaccharides. This chain is Hyaluronidase Tab y 2.0101, found in Tabanus yao (Horsefly).